The chain runs to 131 residues: Fumarate reductase subunit C (131 aa).

3 consecutive transmembrane segments (helical) span residues 30 to 50 (EGTAVPAVWFSIELIFGLFAL), 63 to 83 (FLQNPVIVIINLITLAAALLH), and 109 to 129 (IIKSLWAVTVVATIVILFVAL).

It belongs to the FrdC family. Part of an enzyme complex containing four subunits: a flavoprotein (FrdA), an iron-sulfur protein (FrdB), and two hydrophobic anchor proteins (FrdC and FrdD).

The protein localises to the cell inner membrane. In terms of biological role, two distinct, membrane-bound, FAD-containing enzymes are responsible for the catalysis of fumarate and succinate interconversion; fumarate reductase is used in anaerobic growth, and succinate dehydrogenase is used in aerobic growth. Anchors the catalytic components of the fumarate reductase complex to the cell inner membrane, binds quinones. The polypeptide is Fumarate reductase subunit C (Shigella dysenteriae serotype 1 (strain Sd197)).